We begin with the raw amino-acid sequence, 557 residues long: uncharacterized protein (557 aa).

An N-terminal signal peptide occupies residues methionine 1–alanine 30. Cysteine 31 carries the N-palmitoyl cysteine lipid modification. Cysteine 31 carries the S-diacylglycerol cysteine lipid modification.

This sequence to M.bovis Mb2616c and M.leprae ML0489.

It localises to the cell membrane. This is an uncharacterized protein from Mycobacterium tuberculosis (strain ATCC 25618 / H37Rv).